Here is a 210-residue protein sequence, read N- to C-terminus: Large ribosomal subunit protein uL3 (210 aa).

Basic residues predominate over residues 132 to 144 (GPMKHGSKYHRRP). Residues 132–152 (GPMKHGSKYHRRPGSAGAKGP) form a disordered region.

Belongs to the universal ribosomal protein uL3 family. As to quaternary structure, part of the 50S ribosomal subunit. Forms a cluster with proteins L14 and L19.

Its function is as follows. One of the primary rRNA binding proteins, it binds directly near the 3'-end of the 23S rRNA, where it nucleates assembly of the 50S subunit. The protein is Large ribosomal subunit protein uL3 of Heliobacterium modesticaldum (strain ATCC 51547 / Ice1).